The following is a 61-amino-acid chain: Large ribosomal subunit protein eL24 (61 aa).

Zn(2+)-binding residues include cysteine 7, cysteine 10, cysteine 33, and cysteine 37. A C4-type zinc finger spans residues 7–37 (CSFCGHEIPPGTGLMYVRNDGTILWFCSSKC).

It belongs to the eukaryotic ribosomal protein eL24 family. As to quaternary structure, part of the 50S ribosomal subunit. Forms a cluster with proteins L3 and L14. Zn(2+) is required as a cofactor.

Binds to the 23S rRNA. The chain is Large ribosomal subunit protein eL24 from Saccharolobus islandicus (strain Y.N.15.51 / Yellowstone #2) (Sulfolobus islandicus).